Consider the following 393-residue polypeptide: Interferon regulatory factor 9 (393 aa).

Positions 9–116 (TRKLRNWVVE…EPYKVYQLLP (108 aa)) form a DNA-binding region, IRF tryptophan pentad repeat. Disordered regions lie at residues 120-151 (VSGQ…AMQN) and 163-202 (LNNE…APFQ). Phosphoserine is present on S139.

This sequence belongs to the IRF family. In terms of assembly, interacts with STAT2 in the cytoplasm. Forms the interferon-stimulated gene factor 3 complex (ISGF3) with the heterodimer STAT1:STAT2; upon stimulation. As to quaternary structure, (Microbial infection) Interacts with measles virus V protein; this interaction prevents the binding of IRF9 to STAT2 and thereby the type I interferon signaling pathway. (Microbial infection) Ubiquitinated by Herpes simplex virus 2 E3 ubiquitin ligase ICP22.

It is found in the cytoplasm. It localises to the nucleus. Functionally, transcription factor that plays an essential role in anti-viral immunity. It mediates signaling by type I IFNs (IFN-alpha and IFN-beta). Following type I IFN binding to cell surface receptors, Jak kinases (TYK2 and JAK1) are activated, leading to tyrosine phosphorylation of STAT1 and STAT2. IRF9/ISGF3G associates with the phosphorylated STAT1:STAT2 dimer to form a complex termed ISGF3 transcription factor, that enters the nucleus. ISGF3 binds to the IFN stimulated response element (ISRE) to activate the transcription of interferon stimulated genes, which drive the cell in an antiviral state. The chain is Interferon regulatory factor 9 (IRF9) from Homo sapiens (Human).